The chain runs to 1045 residues: Elongation factor 3 (1045 aa).

The ADP site is built by isoleucine 42, histidine 44, and serine 83. 7 HEAT repeats span residues 86–123 (PYVVALVPAILEQTGSKDKDVQSAANAALHAVVTAVNP), 125–162 (AVKAVLPHLTKSLSETNKWQEKVAVLSAISALVDQAKS), 166–203 (LRMTELIPVLSEAMWDTKKEVKNAATATMTKATETVEN), 171–209 (LIPVLSEAMWDTKKEVKNAATATMTKATETVENKDIERF), 205–241 (DIERFIPKLIECIANPSEVPETVHLLGATTFVAEVTP), 242–279 (ATLSIMTPLLSRGLAERETPIKRKSAVIIDNMCKLVED), and 285–323 (PFLNKLLPGLKNNFSVIADPEAREVTLRGLKTLRRVGAV). ADP-binding residues include threonine 392 and histidine 396. ABC transporter domains follow at residues 426-641 (EEGE…YYEL) and 667-993 (VKVS…KKED). ADP contacts are provided by asparagine 703, glutamate 922, asparagine 925, and histidine 951. The tract at residues 975 to 1045 (GHNWVSGQGS…AYVSDDDADF (71 aa)) is disordered. The span at 1020–1031 (RKKKKERMKKKK) shows a compositional bias: basic residues.

The protein belongs to the ABC transporter superfamily. ABCF family. EF3 subfamily.

It is found in the cytoplasm. The protein resides in the cytosol. The catalysed reaction is ATP + H2O = ADP + phosphate + H(+). Its pathway is protein biosynthesis; polypeptide chain elongation. In terms of biological role, ribosome-dependent ATPase that functions in cytoplasmic translation elongation. Required for the ATP-dependent release of deacylated tRNA from the ribosomal E-site during protein biosynthesis. Stimulates the eEF1A-dependent binding of aminoacyl-tRNA to the ribosomal A-site, which has reduced affinity for tRNA as long as the E-site is occupied. Assists translation termination by stimulating the release of nascent protein from the ribosome by release factors. The chain is Elongation factor 3 from Zygosaccharomyces rouxii (strain ATCC 2623 / CBS 732 / NBRC 1130 / NCYC 568 / NRRL Y-229).